The following is a 156-amino-acid chain: Type IV major fimbrial protein FimA (156 aa).

Positions 1–7 (MKSLQKG) are cleaved as a propeptide — leader sequence. Residue phenylalanine 8 is modified to N-methylphenylalanine. The helical transmembrane segment at 8–28 (FTLIELMIVVAIIGILAAIAI) threads the bilayer. Intrachain disulfides connect cysteine 57/cysteine 67 and cysteine 141/cysteine 154.

It belongs to the N-Me-Phe pilin family. In terms of assembly, the pili are polar flexible filaments of about 5.4 nanometers diameter and 2.5 micrometers average length; they consist of only a single polypeptide chain arranged in a helical configuration of five subunits per turn in the assembled pilus.

Its subcellular location is the fimbrium. The protein localises to the membrane. Functionally, major component of the type IV fimbriae that plays an essential role in twitching motility, natural transformation, and protease secretion. This Dichelobacter nodosus (Bacteroides nodosus) protein is Type IV major fimbrial protein FimA (fimA).